Here is a 334-residue protein sequence, read N- to C-terminus: HTH-type transcriptional repressor PurR (334 aa).

The HTH lacI-type domain maps to 2–56 (ATIKDVAKMAGVSTTTVSHVINKTRFVAAETEKLVLQAIQELNYSPSAVARSLKV). Positions 4 to 23 (IKDVAKMAGVSTTTVSHVIN) form a DNA-binding region, H-T-H motif. The DNA-binding element occupies 48–56 (SAVARSLKV). Hypoxanthine-binding residues include Y73, K189, T191, F220, and D274.

As to quaternary structure, homodimer.

The protein operates within purine metabolism; purine nucleotide biosynthesis [regulation]. Its function is as follows. Is the main repressor of the genes involved in the de novo synthesis of purine nucleotides, regulating purB, purC, purEK, purF, purHD, purL, purMN and guaBA expression. PurR is allosterically activated to bind its cognate DNA by binding the purine corepressors, hypoxanthine or guanine, thereby effecting transcription repression. The sequence is that of HTH-type transcriptional repressor PurR from Pasteurella multocida (strain Pm70).